Here is a 286-residue protein sequence, read N- to C-terminus: uncharacterized protein (286 aa).

The tat-type signal signal peptide spans 1–31 (MKKMSRRQFLKGMFGALAAGALTAGGGYGYA). 6 residues coordinate a divalent metal cation: aspartate 65, histidine 67, aspartate 97, asparagine 130, histidine 221, and histidine 223.

The protein belongs to the metallophosphoesterase superfamily. Requires a divalent metal cation as cofactor. Post-translationally, predicted to be exported by the Tat system. The position of the signal peptide cleavage has not been experimentally proven.

This is an uncharacterized protein from Bacillus subtilis (strain 168).